The primary structure comprises 88 residues: Sec-independent protein translocase protein TatA (88 aa).

Residues 3-23 (IFGVGLPEVTVILILALLIFG) traverse the membrane as a helical segment. The tract at residues 56-88 (MNEQDKDESPISIESNQTNEINQEKIDSENSKK) is disordered. The span at 67–76 (SIESNQTNEI) shows a compositional bias: polar residues. Residues 77 to 88 (NQEKIDSENSKK) show a composition bias toward basic and acidic residues.

This sequence belongs to the TatA/E family. As to quaternary structure, forms a complex with TatC.

It localises to the cell inner membrane. Part of the twin-arginine translocation (Tat) system that transports large folded proteins containing a characteristic twin-arginine motif in their signal peptide across membranes. TatA could form the protein-conducting channel of the Tat system. This is Sec-independent protein translocase protein TatA from Prochlorococcus marinus (strain AS9601).